We begin with the raw amino-acid sequence, 259 residues long: Deoxyribose-phosphate aldolase (259 aa).

D102 serves as the catalytic Proton donor/acceptor. K167 acts as the Schiff-base intermediate with acetaldehyde in catalysis. Residue K201 is the Proton donor/acceptor of the active site.

The protein belongs to the DeoC/FbaB aldolase family. DeoC type 2 subfamily.

Its subcellular location is the cytoplasm. The catalysed reaction is 2-deoxy-D-ribose 5-phosphate = D-glyceraldehyde 3-phosphate + acetaldehyde. The protein operates within carbohydrate degradation; 2-deoxy-D-ribose 1-phosphate degradation; D-glyceraldehyde 3-phosphate and acetaldehyde from 2-deoxy-alpha-D-ribose 1-phosphate: step 2/2. In terms of biological role, catalyzes a reversible aldol reaction between acetaldehyde and D-glyceraldehyde 3-phosphate to generate 2-deoxy-D-ribose 5-phosphate. The protein is Deoxyribose-phosphate aldolase of Edwardsiella ictaluri (strain 93-146).